The sequence spans 49 residues: Large ribosomal subunit protein bL33 (49 aa).

This sequence belongs to the bacterial ribosomal protein bL33 family.

The polypeptide is Large ribosomal subunit protein bL33 (Heliobacterium modesticaldum (strain ATCC 51547 / Ice1)).